We begin with the raw amino-acid sequence, 177 residues long: Adenine phosphoribosyltransferase (177 aa).

This sequence belongs to the purine/pyrimidine phosphoribosyltransferase family. As to quaternary structure, homodimer.

It is found in the cytoplasm. It catalyses the reaction AMP + diphosphate = 5-phospho-alpha-D-ribose 1-diphosphate + adenine. It participates in purine metabolism; AMP biosynthesis via salvage pathway; AMP from adenine: step 1/1. Functionally, catalyzes a salvage reaction resulting in the formation of AMP, that is energically less costly than de novo synthesis. The sequence is that of Adenine phosphoribosyltransferase from Chlorobium chlorochromatii (strain CaD3).